We begin with the raw amino-acid sequence, 100 residues long: Large ribosomal subunit protein uL23 (100 aa).

This sequence belongs to the universal ribosomal protein uL23 family. Part of the 50S ribosomal subunit. Contacts protein L29, and trigger factor when it is bound to the ribosome.

Functionally, one of the early assembly proteins it binds 23S rRNA. One of the proteins that surrounds the polypeptide exit tunnel on the outside of the ribosome. Forms the main docking site for trigger factor binding to the ribosome. The polypeptide is Large ribosomal subunit protein uL23 (Synechococcus sp. (strain WH7803)).